The chain runs to 548 residues: Probable malate:quinone oxidoreductase (548 aa).

It belongs to the MQO family. The cofactor is FAD.

The catalysed reaction is (S)-malate + a quinone = a quinol + oxaloacetate. It participates in carbohydrate metabolism; tricarboxylic acid cycle; oxaloacetate from (S)-malate (quinone route): step 1/1. This chain is Probable malate:quinone oxidoreductase, found in Escherichia coli O6:H1 (strain CFT073 / ATCC 700928 / UPEC).